The following is a 255-amino-acid chain: Indole-3-glycerol phosphate synthase (255 aa).

It belongs to the TrpC family.

The catalysed reaction is 1-(2-carboxyphenylamino)-1-deoxy-D-ribulose 5-phosphate + H(+) = (1S,2R)-1-C-(indol-3-yl)glycerol 3-phosphate + CO2 + H2O. The protein operates within amino-acid biosynthesis; L-tryptophan biosynthesis; L-tryptophan from chorismate: step 4/5. This Streptococcus sanguinis (strain SK36) protein is Indole-3-glycerol phosphate synthase.